A 688-amino-acid polypeptide reads, in one-letter code: NADH-ubiquinone oxidoreductase 75 kDa subunit (688 aa).

The region spanning 1–85 (MIIRFKINEI…DESIETEIDE (85 aa)) is the 2Fe-2S ferredoxin-type domain. Cys-38, Cys-49, Cys-52, and Cys-66 together coordinate [2Fe-2S] cluster. The region spanning 85–124 (EILKAREGVMEFLLINHPLDCPICDQGGECDLQEQTLAYG) is the 4Fe-4S His(Cys)3-ligated-type domain. [4Fe-4S] cluster is bound by residues His-101, Cys-105, Cys-108, Cys-114, Cys-153, Cys-156, Cys-159, and Cys-204. The region spanning 223-279 (LKNIKGIDIFDTLLTPINYQVKGGEIFRILPRINDRINEEWITDKVRFHYESYKIIE) is the 4Fe-4S Mo/W bis-MGD-type domain.

Belongs to the complex I 75 kDa subunit family. Complex I is composed of about 45 different subunits. The cofactor is [2Fe-2S] cluster. It depends on [4Fe-4S] cluster as a cofactor.

The protein resides in the mitochondrion inner membrane. It carries out the reaction a ubiquinone + NADH + 5 H(+)(in) = a ubiquinol + NAD(+) + 4 H(+)(out). Its function is as follows. Core subunit of the mitochondrial membrane respiratory chain NADH dehydrogenase (Complex I) that is believed to belong to the minimal assembly required for catalysis. Complex I functions in the transfer of electrons from NADH to the respiratory chain. The immediate electron acceptor for the enzyme is believed to be ubiquinone. This is the largest subunit of complex I and it is a component of the iron-sulfur (IP) fragment of the enzyme. It may form part of the active site crevice where NADH is oxidized. This Dictyostelium discoideum (Social amoeba) protein is NADH-ubiquinone oxidoreductase 75 kDa subunit (nad11).